Reading from the N-terminus, the 392-residue chain is Iripin-1 (392 aa).

The signal sequence occupies residues 1-16 (MKPLVPLLFLLVSCRA). N-linked (GlcNAc...) asparagine glycans are attached at residues Asn104, Asn196, and Asn265.

Belongs to the serpin family. Interacts with human KLKB1. Interacts with human ST14. Interacts with human PLG (plasmin). In terms of tissue distribution, highly expressed in salivary gland. Expressed in midgut and ovary.

Its subcellular location is the secreted. Its function is as follows. Serine protease inhibitor that modulates blood feeding of ticks on vertebrate species. Modestly inhibits human trypsin, plasma kallikrein (KLKB1), matriptase (ST14) and plasmin (PLG) via a classic serpin inhibitory mechanism. Modestly reduces enzymatic activity of human alpha-chymotrypsin, coagulation factor Xa (F10), factor XIIa (F12), cathepsin G (CTSG), tPA/tissue-type plasminogen activator (PLAT) and uPA/urokinase-type plasminogen activator (PLAU). Probably acts as a substrate rather than an inhibitor for the human neutrophil elastase (ELANE) and thus reduces its enzymatic activity in in vitro assays. Decreases expression of adhesion molecules VCAM1 and CD99 on the surface of human cells. Increases the production of chemokines for neutrophils and monocytes, such as KC/CXCL1, MIP-2/CXCL2 and MIP-1/CCL2, and anti-inflammatory cytokine IL10 in mouse inflammation models. Reduces the recruitment of mouse neutrophils and monocytes to the site of inflammation. Decreases expression of CXCR2 on the surface of mouse neutrophils. Increases expression of integrin ITGAM/ITGB2 on the surface of mouse neutrophils. The protein is Iripin-1 of Ixodes ricinus (Common tick).